The chain runs to 659 residues: Macrolide export ATP-binding/permease protein MacB (659 aa).

An ABC transporter domain is found at 10-249 (IELRGIRKRY…QPLLHHAGLS (240 aa)). 47–54 (GSSGSGKS) provides a ligand contact to ATP. 4 helical membrane passes run 287–307 (SLTL…LAIG), 538–558 (LGLV…NVML), 594–614 (ITGG…LVFW), and 619–639 (VFSF…GLIF).

This sequence belongs to the ABC transporter superfamily. Macrolide exporter (TC 3.A.1.122) family. As to quaternary structure, homodimer.

The protein localises to the cell inner membrane. Non-canonical ABC transporter that contains transmembrane domains (TMD), which form a pore in the inner membrane, and an ATP-binding domain (NBD), which is responsible for energy generation. Confers resistance against macrolides. This is Macrolide export ATP-binding/permease protein MacB from Nitrosomonas europaea (strain ATCC 19718 / CIP 103999 / KCTC 2705 / NBRC 14298).